The following is a 51-amino-acid chain: Sperm protamine P1 (51 aa).

Cystine bridges form between Cys-7/Cys-15 and Cys-38/Cys-48.

This sequence belongs to the protamine P1 family. As to quaternary structure, cross-linked by interchain disulfide bonds around the DNA-helix. Post-translationally, phosphorylated by SRPK1. In terms of tissue distribution, testis.

Its subcellular location is the nucleus. It is found in the chromosome. Its function is as follows. Protamines substitute for histones in the chromatin of sperm during the haploid phase of spermatogenesis. They compact sperm DNA into a highly condensed, stable and inactive complex. This is Sperm protamine P1 (Prm1) from Mus musculus (Mouse).